Consider the following 388-residue polypeptide: LL-diaminopimelate aminotransferase (388 aa).

Residues Tyr-13, Gly-38, Lys-102, Tyr-126, and Asn-176 each coordinate substrate. Pyridoxal 5'-phosphate-binding positions include 101-102 (SK), Tyr-126, Asn-176, Tyr-207, and 235-237 (SLS). Lys-238 is subject to N6-(pyridoxal phosphate)lysine. Arg-246 lines the pyridoxal 5'-phosphate pocket. Residue Arg-364 participates in substrate binding.

It belongs to the class-I pyridoxal-phosphate-dependent aminotransferase family. LL-diaminopimelate aminotransferase subfamily. As to quaternary structure, homodimer. The cofactor is pyridoxal 5'-phosphate.

It catalyses the reaction (2S,6S)-2,6-diaminopimelate + 2-oxoglutarate = (S)-2,3,4,5-tetrahydrodipicolinate + L-glutamate + H2O + H(+). Its pathway is amino-acid biosynthesis; L-lysine biosynthesis via DAP pathway; LL-2,6-diaminopimelate from (S)-tetrahydrodipicolinate (aminotransferase route): step 1/1. Involved in the synthesis of meso-diaminopimelate (m-DAP or DL-DAP), required for both lysine and peptidoglycan biosynthesis. Catalyzes the direct conversion of tetrahydrodipicolinate to LL-diaminopimelate. The protein is LL-diaminopimelate aminotransferase of Dehalococcoides mccartyi (strain ATCC BAA-2100 / JCM 16839 / KCTC 5957 / BAV1).